The following is a 263-amino-acid chain: tRNA (guanine-N(7)-)-methyltransferase (263 aa).

The tract at residues 1 to 33 (MSDHGRMHSTGSEVAAPVAPDPDTEGVHPHFNR) is disordered. S-adenosyl-L-methionine contacts are provided by Glu89, Glu114, Asp146, and Asp169. Asp169 is a catalytic residue. Substrate is bound by residues Lys173, Asp205, and 242–245 (TKYE).

This sequence belongs to the class I-like SAM-binding methyltransferase superfamily. TrmB family.

It catalyses the reaction guanosine(46) in tRNA + S-adenosyl-L-methionine = N(7)-methylguanosine(46) in tRNA + S-adenosyl-L-homocysteine. It participates in tRNA modification; N(7)-methylguanine-tRNA biosynthesis. Its function is as follows. Catalyzes the formation of N(7)-methylguanine at position 46 (m7G46) in tRNA. This Mycolicibacterium gilvum (strain PYR-GCK) (Mycobacterium gilvum (strain PYR-GCK)) protein is tRNA (guanine-N(7)-)-methyltransferase.